A 753-amino-acid chain; its full sequence is Dolichyl-phosphate-mannose--protein mannosyltransferase 3 (753 aa).

Over 1–50 (MPYRVATGYSEKSTDDDLIWRTPIVKEELEDADNFLKDDAELYDKVKNES) the chain is Cytoplasmic. The chain crosses the membrane as a helical span at residues 51-71 (AVSHLDTIVMPIIFTVLGMFT). Over 72–148 (RMYKIGRNNH…IDYVKMRLFQ (77 aa)) the chain is Lumenal. An N-linked (GlcNAc...) asparagine glycan is attached at Asn-124. A helical transmembrane segment spans residues 149–169 (AMFSSLCVPLAYFTGRAIGFS). Residues 170–174 (RLSVW) are Cytoplasmic-facing. Residues 175-195 (LFTILVIFENSYATLGKFILL) traverse the membrane as a helical segment. At 196–235 (DSMLLFFTVSSYFCLAKFHTMRKSPFSARWWLWLCLTGLN) the chain is on the lumenal side. A helical membrane pass occupies residues 236 to 256 (LGCAISVKMVGLFIISVVGIY). Residues 257–282 (TISELWNLLSDRSVSWKVYVNHWLAR) are Cytoplasmic-facing. Residues 283-303 (IFGLIIIPVCVFLLCFKIHFD) traverse the membrane as a helical segment. Residues 304–602 (LLSNSGPGDS…IKYFLLGSPA (299 aa)) lie on the Lumenal side of the membrane. N-linked (GlcNAc...) asparagine glycosylation is present at Asn-324. The 56-residue stretch at 332–387 (PRDVALGSSIISIKNQALGGALLHSHVQPFPEGSEQQQVTVYGYSDANNEWFFQRI) folds into the MIR 1 domain. N-linked (GlcNAc...) asparagine glycosylation is present at Asn-398. MIR domains follow at residues 401–457 (IEFV…IEIV) and 465–523 (PTLL…IETH). Residues 603–623 (SVWPSSIAVCALIIHVIFLTL) form a helical membrane-spanning segment. At 624–639 (KWQRQCVILSDPVERD) the chain is on the cytoplasmic side. Residues 640–660 (VFVMAAFYPLLAWLLHYMPFV) traverse the membrane as a helical segment. The Lumenal portion of the chain corresponds to 661–665 (VMSRV). A helical transmembrane segment spans residues 666-686 (VYAHHYLPTLYFALMILSYYF). The Cytoplasmic portion of the chain corresponds to 687–703 (DMITKRWATRNTGKFLR). The chain crosses the membrane as a helical span at residues 704 to 724 (LGAYIVYGSIVIAGFFYFSPF). Residues 725-753 (SFGMDGPVDDYAYLAWLPTWQIVEDIRNT) are Lumenal-facing.

It belongs to the glycosyltransferase 39 family. As to quaternary structure, PMT3 and PMT5 form a functional heterodimer. Also forms a minor complex with PMT1.

It is found in the endoplasmic reticulum membrane. The catalysed reaction is a di-trans,poly-cis-dolichyl beta-D-mannosyl phosphate + L-seryl-[protein] = 3-O-(alpha-D-mannosyl)-L-seryl-[protein] + a di-trans,poly-cis-dolichyl phosphate + H(+). The enzyme catalyses a di-trans,poly-cis-dolichyl beta-D-mannosyl phosphate + L-threonyl-[protein] = 3-O-(alpha-D-mannosyl)-L-threonyl-[protein] + a di-trans,poly-cis-dolichyl phosphate + H(+). It functions in the pathway protein modification; protein glycosylation. Its function is as follows. Protein O-mannosyltransferase involved in O-glycosylation which is essential for cell wall rigidity. Forms a heterodimeric complex with PMT5 and more rarely with PMT1 to transfer mannose from Dol-P-mannose to Ser or Thr residues on proteins. Seems to have redundant activity to PMT2. In Saccharomyces cerevisiae (strain ATCC 204508 / S288c) (Baker's yeast), this protein is Dolichyl-phosphate-mannose--protein mannosyltransferase 3.